Here is a 230-residue protein sequence, read N- to C-terminus: Probable septum site-determining protein MinC (230 aa).

The protein belongs to the MinC family. Interacts with MinD and FtsZ.

In terms of biological role, cell division inhibitor that blocks the formation of polar Z ring septums. Rapidly oscillates between the poles of the cell to destabilize FtsZ filaments that have formed before they mature into polar Z rings. Prevents FtsZ polymerization. The sequence is that of Probable septum site-determining protein MinC from Erwinia tasmaniensis (strain DSM 17950 / CFBP 7177 / CIP 109463 / NCPPB 4357 / Et1/99).